The primary structure comprises 503 residues: Maturase K (503 aa).

Belongs to the intron maturase 2 family. MatK subfamily.

Its subcellular location is the plastid. The protein resides in the chloroplast. Its function is as follows. Usually encoded in the trnK tRNA gene intron. Probably assists in splicing its own and other chloroplast group II introns. This chain is Maturase K, found in Cercocarpus betuloides (Mountain mahogany).